Here is a 224-residue protein sequence, read N- to C-terminus: Large ribosomal subunit protein uL1m (224 aa).

Belongs to the universal ribosomal protein uL1 family.

It localises to the mitochondrion. The protein is Large ribosomal subunit protein uL1m (RPL1) of Reclinomonas americana.